The primary structure comprises 468 residues: Sorting and assembly machinery component 50 homolog (468 aa).

Positions 1–24 (MGTVHARSLDPLPMNGPDFGSHDD) are disordered. A POTRA domain is found at 44–124 (VVVQRVHFEG…LDVTFEVTEL (81 aa)).

It belongs to the SAM50/omp85 family. In terms of assembly, associates with the mitochondrial contact site and cristae organizing system (MICOS) complex (also known as MINOS or MitOS complex).

The protein localises to the mitochondrion outer membrane. May play a role in the maintenance of the structure of mitochondrial cristae. This is Sorting and assembly machinery component 50 homolog (samm50) from Xenopus tropicalis (Western clawed frog).